The chain runs to 83 residues: Large ribosomal subunit protein bL27 (83 aa).

The interval 1-21 is disordered; sequence MAHKRSSGAGRNGRDSNPKYL.

It belongs to the bacterial ribosomal protein bL27 family.

This is Large ribosomal subunit protein bL27 from Kosmotoga olearia (strain ATCC BAA-1733 / DSM 21960 / TBF 19.5.1).